A 168-amino-acid polypeptide reads, in one-letter code: Ribosome rescue factor SmrB (168 aa).

One can recognise a Smr domain in the interval 92-167; sequence LDLHGLTKEQ…GDAAILILFE (76 aa).

Belongs to the SmrB family. As to quaternary structure, associates with collided ribosomes, but not with correctly translating polysomes.

Functionally, acts as a ribosome collision sensor. Detects stalled/collided disomes (pairs of ribosomes where the leading ribosome is stalled and a second ribosome has collided with it) and endonucleolytically cleaves mRNA at the 5' boundary of the stalled ribosome. Stalled/collided disomes form a new interface (primarily via the 30S subunits) that binds SmrB. Cleaved mRNA becomes available for tmRNA ligation, leading to ribosomal subunit dissociation and rescue of stalled ribosomes. The protein is Ribosome rescue factor SmrB of Pasteurella multocida (strain Pm70).